Reading from the N-terminus, the 240-residue chain is Uridylate kinase (240 aa).

ATP is bound at residue 13 to 16 (KASG). Positions 21 to 26 (GSQGFG) are involved in allosteric activation by GTP. Glycine 55 provides a ligand contact to UMP. Residues glycine 56 and arginine 60 each coordinate ATP. Residues aspartate 75 and 136–143 (TGNPFFTT) contribute to the UMP site. Residues threonine 163, glutamine 164, tyrosine 169, and aspartate 172 each coordinate ATP.

The protein belongs to the UMP kinase family. Homohexamer.

It is found in the cytoplasm. The enzyme catalyses UMP + ATP = UDP + ADP. Its pathway is pyrimidine metabolism; CTP biosynthesis via de novo pathway; UDP from UMP (UMPK route): step 1/1. Its activity is regulated as follows. Allosterically activated by GTP. Inhibited by UTP. In terms of biological role, catalyzes the reversible phosphorylation of UMP to UDP. The chain is Uridylate kinase from Brucella suis biovar 1 (strain 1330).